The primary structure comprises 354 residues: UDP-3-O-acylglucosamine N-acyltransferase (354 aa).

H250 acts as the Proton acceptor in catalysis.

The protein belongs to the transferase hexapeptide repeat family. LpxD subfamily. In terms of assembly, homotrimer.

The catalysed reaction is a UDP-3-O-[(3R)-3-hydroxyacyl]-alpha-D-glucosamine + a (3R)-hydroxyacyl-[ACP] = a UDP-2-N,3-O-bis[(3R)-3-hydroxyacyl]-alpha-D-glucosamine + holo-[ACP] + H(+). Its pathway is bacterial outer membrane biogenesis; LPS lipid A biosynthesis. Functionally, catalyzes the N-acylation of UDP-3-O-acylglucosamine using 3-hydroxyacyl-ACP as the acyl donor. Is involved in the biosynthesis of lipid A, a phosphorylated glycolipid that anchors the lipopolysaccharide to the outer membrane of the cell. In Methylococcus capsulatus (strain ATCC 33009 / NCIMB 11132 / Bath), this protein is UDP-3-O-acylglucosamine N-acyltransferase.